The chain runs to 463 residues: Lipase 5 (463 aa).

An N-terminal signal peptide occupies residues 1–14; it reads MLYLILFLIAPIYA. Cys110 and Cys281 are oxidised to a cystine. Ser194 (charge relay system) is an active-site residue. An N-linked (GlcNAc...) asparagine glycan is attached at Asn229. Residues Asp343 and His376 each act as charge relay system in the active site. Cysteines 359 and 404 form a disulfide.

The protein belongs to the AB hydrolase superfamily. Lipase family. Class Lip subfamily.

The protein localises to the secreted. It catalyses the reaction a triacylglycerol + H2O = a diacylglycerol + a fatty acid + H(+). Fe(2)+, Fe(3+), Hg(2+) as well as ethylenediaminetetraacetic acid (EDTA) and phenylmethanesulfonyl fluoride (PMSF) strongly inhibit the lipase activity. Surfactants such as Tween 20, Tween 80 and TritonX-100 show also inhibitory effect in the lipase activity. Sodium dodecyl sulfate (SDS) sharply decreases the lipase activity by 85%. Methanol, ethanol, and acetone have also negative effect on the lipase activity, with residual activities at 48%, 24% and 44% respectively. Finally, lipase activity is almost lost in the presence of isopropanol alcohol. Its function is as follows. Secreted lipase that is able to hydrolyze both the neutral triacylglycerols and the monopalmitate ester Tween 40, allowing the use of hydrolyzed products as carbon sources. Exhibits a preference for the short and medium chain length p-NP (C4 and C8 acyl group) esters rather than the long chain length p-NP esters (C12, C16 and C18 acyl group). Has broad lipolytic activity, which may be important for colonization and subsequent infection, therefore contributing to the persistence and virulence in human tissue. This is Lipase 5 from Candida albicans (strain SC5314 / ATCC MYA-2876) (Yeast).